The primary structure comprises 445 residues: Argininosuccinate synthase (445 aa).

ATP-binding positions include 17–25 (AFSGGLDTS) and A43. Residue Y99 coordinates L-citrulline. Residues G129 and T131 each coordinate ATP. Residues T131, N135, and D136 each coordinate L-aspartate. N135 lines the L-citrulline pocket. D136 serves as a coordination point for ATP. L-citrulline contacts are provided by R139 and S192. Residue D194 coordinates ATP. L-citrulline-binding residues include T201, E203, and E280.

Belongs to the argininosuccinate synthase family. Type 2 subfamily. Homotetramer.

The protein resides in the cytoplasm. It catalyses the reaction L-citrulline + L-aspartate + ATP = 2-(N(omega)-L-arginino)succinate + AMP + diphosphate + H(+). Its pathway is amino-acid biosynthesis; L-arginine biosynthesis; L-arginine from L-ornithine and carbamoyl phosphate: step 2/3. This chain is Argininosuccinate synthase, found in Ralstonia pickettii (strain 12J).